The following is a 246-amino-acid chain: ATP synthase subunit a (246 aa).

Helical transmembrane passes span 34 to 54 (GQTM…TFIG), 92 to 112 (WVPL…LGQL), 130 to 150 (DINT…YAGL), 155 to 175 (FGYF…VLEF), and 196 to 216 (VVAV…MILF).

It belongs to the ATPase A chain family. In terms of assembly, F-type ATPases have 2 components, CF(1) - the catalytic core - and CF(0) - the membrane proton channel. CF(1) has five subunits: alpha(3), beta(3), gamma(1), delta(1), epsilon(1). CF(0) has four main subunits: a, b, b' and c.

The protein localises to the cell inner membrane. Key component of the proton channel; it plays a direct role in the translocation of protons across the membrane. This Gloeobacter violaceus (strain ATCC 29082 / PCC 7421) protein is ATP synthase subunit a.